The primary structure comprises 418 residues: Gamma-glutamyl phosphate reductase (418 aa).

Belongs to the gamma-glutamyl phosphate reductase family.

It localises to the cytoplasm. It carries out the reaction L-glutamate 5-semialdehyde + phosphate + NADP(+) = L-glutamyl 5-phosphate + NADPH + H(+). It functions in the pathway amino-acid biosynthesis; L-proline biosynthesis; L-glutamate 5-semialdehyde from L-glutamate: step 2/2. Catalyzes the NADPH-dependent reduction of L-glutamate 5-phosphate into L-glutamate 5-semialdehyde and phosphate. The product spontaneously undergoes cyclization to form 1-pyrroline-5-carboxylate. This Thermobifida fusca (strain YX) protein is Gamma-glutamyl phosphate reductase.